We begin with the raw amino-acid sequence, 554 residues long: MAAYLFLLGLFLLLPRPVPAPCYTATRSECKQNHKFVPGVWAAGEGVDVTTLRRSSSFPVNTGKFLRPDRTCTLCKNALMNDGIQRLPVAIAHWRPHGSHCQRNVATTKVSSTEGVAREAAANINNDWRAGLDVNPKPEANVHVSVAGSHSKIANFAAEKAHQDQYNFNTDTVECRMYSFRLAQKPPLHPDFRKALKNLPHNFNSSTEHAYRRLISSYGTHFITAVDLGGRVSVLTALRTCQLTLDGLTADEVGDCLSVEAQVSIGAQASVSSEYKACEEKKKQHKIATSFHQTYRERHVEVLGGPLDSSNDLLFGNQATPEHFSTWIASLPTRPDVVDYSLEPLHILLEDSDPKREALRQAISHYVMSRARWRDCNRPCRAGQHKSSRDSCQCVCQDSNVTNQDCCPRQRGLAKLMVRNFQAKGLWGDYITSTDAYLKVFFGGQEIRTGVVWNNNHPSWSDKMDFGNVLLSTGGPLRVQVWDADNGWDDDLLGTCDKSPKSGFHEVNCPLNHGSIKFIYQANCLPDLTGETCLEYAPQGLLGDPRGNRSGAVW.

The first 20 residues, 1–20 (MAAYLFLLGLFLLLPRPVPA), serve as a signal peptide directing secretion. 3 disulfide bridges follow: C22-C75, C30-C72, and C101-C175. Positions 26 to 374 (TRSECKQNHK…HYVMSRARWR (349 aa)) constitute an MACPF domain. The chain crosses the membrane as a beta stranded span at residues 128 to 148 (WRAGLDVNPKPEANVHVSVAG). N204 is a glycosylation site (N-linked (GlcNAc...) asparagine). 4 disulfides stabilise this stretch: C241/C407, C376/C392, C380/C394, and C396/C406. Residues 256 to 278 (CLSVEAQVSIGAQASVSSEYKAC) form a beta stranded membrane-spanning segment. Positions 375-407 (DCNRPCRAGQHKSSRDSCQCVCQDSNVTNQDCC) constitute an EGF-like domain. A C2 domain is found at 395-513 (VCQDSNVTNQ…FHEVNCPLNH (119 aa)). N400 is a glycosylation site (N-linked (GlcNAc...) asparagine). The Ca(2+) site is built by G428, D429, T432, D435, N454, D483, A484, D485, W488, D489, D490, and D491. Disulfide bonds link C496–C509 and C524–C533. N548 carries N-linked (GlcNAc...) asparagine glycosylation.

This sequence belongs to the complement C6/C7/C8/C9 family. As to quaternary structure, monomer, as soluble protein. Homooligomer; homooligomerizes to form a pore-forming ring. Ca(2+) serves as cofactor. N-glycosylated. Detected in large granular lymphocytes and lymphokine-activated killer cells.

It is found in the cytolytic granule. The protein localises to the secreted. The protein resides in the cell membrane. It localises to the endosome lumen. Pore-forming protein that plays a key role in granzyme-mediated programmed cell death, and in defense against virus-infected or neoplastic cells. Can insert into the membrane of target cells in its calcium-bound form, oligomerize and form large pores. Promotes cytolysis and apoptosis of target cells by mediating the passage and uptake of cytotoxic granzymes. Facilitates the delivery of cationic cargo protein, while anionic or neural proteins are not delivered efficiently. Perforin pores allow the release of mature caspase-7 (CASP7) into the extracellular milieu. The chain is Perforin-1 (Prf1) from Rattus norvegicus (Rat).